The primary structure comprises 473 residues: Aspartyl/glutamyl-tRNA(Asn/Gln) amidotransferase subunit B (473 aa).

The protein belongs to the GatB/GatE family. GatB subfamily. As to quaternary structure, heterotrimer of A, B and C subunits.

The catalysed reaction is L-glutamyl-tRNA(Gln) + L-glutamine + ATP + H2O = L-glutaminyl-tRNA(Gln) + L-glutamate + ADP + phosphate + H(+). It carries out the reaction L-aspartyl-tRNA(Asn) + L-glutamine + ATP + H2O = L-asparaginyl-tRNA(Asn) + L-glutamate + ADP + phosphate + 2 H(+). Allows the formation of correctly charged Asn-tRNA(Asn) or Gln-tRNA(Gln) through the transamidation of misacylated Asp-tRNA(Asn) or Glu-tRNA(Gln) in organisms which lack either or both of asparaginyl-tRNA or glutaminyl-tRNA synthetases. The reaction takes place in the presence of glutamine and ATP through an activated phospho-Asp-tRNA(Asn) or phospho-Glu-tRNA(Gln). This Mycoplasmopsis synoviae (strain 53) (Mycoplasma synoviae) protein is Aspartyl/glutamyl-tRNA(Asn/Gln) amidotransferase subunit B.